We begin with the raw amino-acid sequence, 30 residues long: Ranatuerin-2OK (30 aa).

A disulfide bridge links Cys-23 with Cys-30.

In terms of tissue distribution, expressed by the skin glands.

It is found in the secreted. In terms of biological role, antimicrobial peptide. Active against Gram-negative bacterium E.coli (MIC=12.5 uM) and against Gram-positive bacterium S.aureus (MIC=50 uM). The protein is Ranatuerin-2OK of Nidirana okinavana (Kampira Falls frog).